We begin with the raw amino-acid sequence, 167 residues long: Large ribosomal subunit protein uL10 (167 aa).

Belongs to the universal ribosomal protein uL10 family. In terms of assembly, part of the ribosomal stalk of the 50S ribosomal subunit. The N-terminus interacts with L11 and the large rRNA to form the base of the stalk. The C-terminus forms an elongated spine to which L12 dimers bind in a sequential fashion forming a multimeric L10(L12)X complex.

Forms part of the ribosomal stalk, playing a central role in the interaction of the ribosome with GTP-bound translation factors. In Psychromonas ingrahamii (strain DSM 17664 / CCUG 51855 / 37), this protein is Large ribosomal subunit protein uL10.